The sequence spans 246 residues: Homeobox protein SIX6 (246 aa).

The segment at residues 126–186 is a DNA-binding region (homeobox); the sequence is WDGEQKTHCF…KNRRQRDRAA (61 aa). The segment at 190 to 246 is disordered; that stretch reads NRLQQQVLSQGPGRVLRSEGEGTPEVLGVASSPAASLSSKAATSAISITSSDSECDI. Thr-212 is subject to Phosphothreonine. Residues 219–246 are compositionally biased toward low complexity; it reads ASSPAASLSSKAATSAISITSSDSECDI. 4 positions are modified to phosphoserine: Ser-221, Ser-225, Ser-227, and Ser-228.

This sequence belongs to the SIX/Sine oculis homeobox family. In terms of assembly, interacts with TLE4 and TLE5. In the developing embryo, expressed mainly in the ventral optic stalk, optic chiasma, the neural retina and the primordial tissues that give rise to the pituitary/hypothalamus axis. Not expressed in the lens placode.

It localises to the nucleus. Its function is as follows. May be involved in eye development. The polypeptide is Homeobox protein SIX6 (Six6) (Mus musculus (Mouse)).